The sequence spans 251 residues: Chlorocatechol 1,2-dioxygenase (251 aa).

Fe cation-binding residues include tyrosine 130, tyrosine 164, histidine 188, and histidine 190.

It belongs to the intradiol ring-cleavage dioxygenase family. Requires Fe(3+) as cofactor.

The enzyme catalyses 3-chlorocatechol + O2 = (2E,4Z)-2-chloromuconate + 2 H(+). The catalysed reaction is 3,4-dichlorocatechol + O2 = (2Z,4Z)-2,3-dichloromuconate + 2 H(+). It carries out the reaction 3,5-dichlorocatechol + O2 = (2E,4E)-2,4-dichloromuconate + 2 H(+). It catalyses the reaction 3,6-dichlorocatechol + O2 = (2E,4E)-2,5-dichloromuconate + H(+). The enzyme catalyses 3,4,6-trichlorocatechol + O2 = (2Z,4E)-2,3,5-trichloromuconate + H(+). The protein operates within xenobiotic degradation. Functionally, chlorocatechol 1,2-dioxygenase involved in the degradation of chlorinated benzenes, that occurs via chlorocatechol intermediates. Displays broad substrate specificity. Preferentially cleaves 3-chlorocatechol and 3,4-dichlorocatechol, and shows lower activity on 3,5-dichlorocatechol, 3,6-dichlorocatechol and 3,4,6-trichlorocatechol in vitro. Is not able to convert 3,4,5-trichlorocatechol and 3,4,5,6-tetrachlorocatechol. Thus, probably functions in the degradation pathways of 1,2-dichlorobenzene, 1,4-dichlorobenzene and 1,2,4-trichlorobenzene (via 3,4-dichlorocatechol, 3,6-dichlorocatechol and 3,4,6-trichlorocatechol intermediates, respectively), which allow Pseudomonas sp. strain P51 to grow on these substrates as the sole carbon and energy source. The sequence is that of Chlorocatechol 1,2-dioxygenase from Pseudomonas sp. (strain P51).